We begin with the raw amino-acid sequence, 148 residues long: MEKTFVMVKPDGVQRQLIGEILLRFERKGLQLIGAKLMKVSEETAGEHYKEHNGKPFFGELVDFITSGPVFAMVWEGEDAIAVARQLIGKTNPKEALPGTIRGDFGMFVGKNIIHGSDSPESAAREINLFFKEDELVEDEKLMNQWIY.

Residues Lys-9, Phe-57, Arg-85, Thr-91, Arg-102, and Asn-112 each coordinate ATP. Thr-91 carries the phosphothreonine modification. The Pros-phosphohistidine intermediate role is filled by His-115. Ser-122 is modified (phosphoserine).

This sequence belongs to the NDK family. In terms of assembly, homotetramer. Mg(2+) serves as cofactor.

It is found in the cytoplasm. The catalysed reaction is a 2'-deoxyribonucleoside 5'-diphosphate + ATP = a 2'-deoxyribonucleoside 5'-triphosphate + ADP. It catalyses the reaction a ribonucleoside 5'-diphosphate + ATP = a ribonucleoside 5'-triphosphate + ADP. In terms of biological role, major role in the synthesis of nucleoside triphosphates other than ATP. The ATP gamma phosphate is transferred to the NDP beta phosphate via a ping-pong mechanism, using a phosphorylated active-site intermediate. The sequence is that of Nucleoside diphosphate kinase from Bacillus licheniformis (strain ATCC 14580 / DSM 13 / JCM 2505 / CCUG 7422 / NBRC 12200 / NCIMB 9375 / NCTC 10341 / NRRL NRS-1264 / Gibson 46).